Consider the following 498-residue polypeptide: Lysine--tRNA ligase (498 aa).

Glu408 and Glu415 together coordinate Mg(2+).

This sequence belongs to the class-II aminoacyl-tRNA synthetase family. In terms of assembly, homodimer. The cofactor is Mg(2+).

The protein localises to the cytoplasm. It catalyses the reaction tRNA(Lys) + L-lysine + ATP = L-lysyl-tRNA(Lys) + AMP + diphosphate. The polypeptide is Lysine--tRNA ligase (Pediococcus pentosaceus (strain ATCC 25745 / CCUG 21536 / LMG 10740 / 183-1w)).